The following is a 216-amino-acid chain: Adenylate kinase (216 aa).

10–15 is a binding site for ATP; sequence GAGKGT. The tract at residues 30 to 59 is NMP; it reads STGDIFRAHMSQGTPLGKLAKEYVDAGKYV. Residues Thr-31, Arg-36, 57–59, 85–88, and Gln-92 contribute to the AMP site; these read KYV and GYPR. Positions 126-163 are LID; it reads GRRVCRSCGATYHVRFNPPREAGRCDRCGGELYQRSDD. Residue Arg-127 coordinates ATP. Zn(2+) contacts are provided by Cys-130 and Cys-133. 136–137 serves as a coordination point for ATP; sequence TY. Cys-150 and Cys-153 together coordinate Zn(2+). AMP is bound by residues Arg-160 and Arg-171. Position 199 (Gln-199) interacts with ATP.

The protein belongs to the adenylate kinase family. As to quaternary structure, monomer.

It localises to the cytoplasm. The catalysed reaction is AMP + ATP = 2 ADP. It functions in the pathway purine metabolism; AMP biosynthesis via salvage pathway; AMP from ADP: step 1/1. Catalyzes the reversible transfer of the terminal phosphate group between ATP and AMP. Plays an important role in cellular energy homeostasis and in adenine nucleotide metabolism. In Symbiobacterium thermophilum (strain DSM 24528 / JCM 14929 / IAM 14863 / T), this protein is Adenylate kinase.